The chain runs to 69 residues: Conotoxin Lt5.7 (69 aa).

An N-terminal signal peptide occupies residues 1-19 (MLCLPVFIILLLLASPAAP). A propeptide spanning residues 20 to 54 (KSLETRIQNDLIRAGLTDADLKTEKGFLSGLLNVA) is cleaved from the precursor.

The protein belongs to the conotoxin T superfamily. Post-translationally, contains 2 disulfide bonds that can be either 'C1-C3, C2-C4' or 'C1-C4, C2-C3', since these disulfide connectivities have been observed for conotoxins with cysteine framework V (for examples, see AC P0DQQ7 and AC P81755). In terms of tissue distribution, expressed by the venom duct.

Its subcellular location is the secreted. This is Conotoxin Lt5.7 from Conus litteratus (Lettered cone).